The chain runs to 306 residues: Homeobox protein HMX3 (306 aa).

Positions His-95 to Thr-181 are disordered. 2 stretches are compositionally biased toward basic and acidic residues: residues Gly-117–Glu-143 and Glu-153–Lys-174. Residues Lys-178 to Leu-237 constitute a DNA-binding region (homeobox).

This sequence belongs to the HMX homeobox family.

The protein resides in the nucleus. Functionally, transcription factor involved in specification of neuronal cell types and which is required for inner ear and hypothalamus development. Binds to the 5'-CAAGTG-3' core sequence. May act as a stage-specific inhibitor of anf1 in the anterior neural plate during the development. In Xenopus tropicalis (Western clawed frog), this protein is Homeobox protein HMX3 (hmx3).